Consider the following 232-residue polypeptide: Phosphatidylserine decarboxylase proenzyme (232 aa).

The Schiff-base intermediate with substrate; via pyruvic acid role is filled by S190. Position 190 is a pyruvic acid (Ser); by autocatalysis (S190).

It belongs to the phosphatidylserine decarboxylase family. PSD-A subfamily. Heterodimer of a large membrane-associated beta subunit and a small pyruvoyl-containing alpha subunit. Pyruvate is required as a cofactor. In terms of processing, is synthesized initially as an inactive proenzyme. Formation of the active enzyme involves a self-maturation process in which the active site pyruvoyl group is generated from an internal serine residue via an autocatalytic post-translational modification. Two non-identical subunits are generated from the proenzyme in this reaction, and the pyruvate is formed at the N-terminus of the alpha chain, which is derived from the carboxyl end of the proenzyme. The post-translation cleavage follows an unusual pathway, termed non-hydrolytic serinolysis, in which the side chain hydroxyl group of the serine supplies its oxygen atom to form the C-terminus of the beta chain, while the remainder of the serine residue undergoes an oxidative deamination to produce ammonia and the pyruvoyl prosthetic group on the alpha chain.

The protein resides in the cell membrane. It catalyses the reaction a 1,2-diacyl-sn-glycero-3-phospho-L-serine + H(+) = a 1,2-diacyl-sn-glycero-3-phosphoethanolamine + CO2. It participates in phospholipid metabolism; phosphatidylethanolamine biosynthesis; phosphatidylethanolamine from CDP-diacylglycerol: step 2/2. Catalyzes the formation of phosphatidylethanolamine (PtdEtn) from phosphatidylserine (PtdSer). The chain is Phosphatidylserine decarboxylase proenzyme from Brucella abortus (strain S19).